Reading from the N-terminus, the 104-residue chain is Large ribosomal subunit protein bL21 (104 aa).

This sequence belongs to the bacterial ribosomal protein bL21 family. Part of the 50S ribosomal subunit. Contacts protein L20.

Functionally, this protein binds to 23S rRNA in the presence of protein L20. This is Large ribosomal subunit protein bL21 from Tropheryma whipplei (strain TW08/27) (Whipple's bacillus).